Reading from the N-terminus, the 303-residue chain is Beta-lactamase L2 (303 aa).

A signal peptide (tat-type signal) is located at residues 1 to 35 (MLARRRFLQFSGAAVASSLALPLLARAAGKTAASA). The active-site Acyl-ester intermediate is S83. A substrate-binding site is contributed by 247–249 (KTG).

This sequence belongs to the class-A beta-lactamase family. Post-translationally, predicted to be exported by the Tat system. The position of the signal peptide cleavage has not been experimentally proven.

It carries out the reaction a beta-lactam + H2O = a substituted beta-amino acid. The protein is Beta-lactamase L2 of Stenotrophomonas maltophilia (Pseudomonas maltophilia).